The following is a 239-amino-acid chain: Cysteine-rich venom protein ophanin (239 aa).

A signal peptide spans 1–18 (MIAFTLLSLAAVLQQSFG). Positions 37–165 (VDLHNSLRRS…EYSYFYVCQY (129 aa)) constitute an SCP domain. 8 cysteine pairs are disulfide-bonded: Cys-74/Cys-152, Cys-91/Cys-166, Cys-147/Cys-163, Cys-185/Cys-192, Cys-188/Cys-197, Cys-201/Cys-234, Cys-210/Cys-228, and Cys-219/Cys-232. The ShKT domain maps to 201–234 (CTLYNEYTNCDSLVKQSSCQDEWIKSKCPASCFC).

As to expression, expressed by the venom gland.

The protein resides in the secreted. Functionally, weakly blocks contraction of smooth muscle elicited by high potassium-induced depolarization, but does not block caffeine-stimulated contraction. May target voltage-gated calcium channels on smooth muscle. This Ophiophagus hannah (King cobra) protein is Cysteine-rich venom protein ophanin.